The chain runs to 485 residues: Cyclic GMP-AMP synthase-like receptor (485 aa).

ATP-binding positions include Ser-70 and 82-84; that span reads EYD. Glu-82, Asp-84, and Asp-204 together coordinate Mg(2+). Residues Asp-204 and 247 to 254 each bind GTP; that span reads RLSFYEQE. ATP is bound by residues Lys-271 and Lys-274. Residues Ile-298 and Asp-304 each contribute to the Mn(2+) site.

It belongs to the mab-21 family. Mg(2+) is required as a cofactor. The cofactor is Mn(2+).

It catalyses the reaction GTP + ATP = 2',3'-cGAMP + 2 diphosphate. It carries out the reaction GTP + ATP = pppGp(2'-5')A + diphosphate. The catalysed reaction is pppGp(2'-5')A = 2',3'-cGAMP + diphosphate. Its function is as follows. Nucleotidyltransferase that catalyzes the formation of cyclic GMP-AMP (2',3'-cGAMP) from ATP and GTP and plays a key role in innate immunity. Directly binds some unknown ligand, activating the nucleotidyltransferase activity, leading to synthesis of 2',3'-cGAMP, a second messenger that binds to and activates Sting, thereby triggering the immune response via activation of the NF-kappa-B transcription factor. This chain is Cyclic GMP-AMP synthase-like receptor, found in Trichogramma pretiosum (Parasitoid wasp).